Reading from the N-terminus, the 387-residue chain is Anhydro-N-acetylmuramic acid kinase (387 aa).

Position 9–16 (9–16) interacts with ATP; that stretch reads GTSADGVD.

Belongs to the anhydro-N-acetylmuramic acid kinase family.

The catalysed reaction is 1,6-anhydro-N-acetyl-beta-muramate + ATP + H2O = N-acetyl-D-muramate 6-phosphate + ADP + H(+). It participates in amino-sugar metabolism; 1,6-anhydro-N-acetylmuramate degradation. Its pathway is cell wall biogenesis; peptidoglycan recycling. In terms of biological role, catalyzes the specific phosphorylation of 1,6-anhydro-N-acetylmuramic acid (anhMurNAc) with the simultaneous cleavage of the 1,6-anhydro ring, generating MurNAc-6-P. Is required for the utilization of anhMurNAc either imported from the medium or derived from its own cell wall murein, and thus plays a role in cell wall recycling. The polypeptide is Anhydro-N-acetylmuramic acid kinase (Synechococcus sp. (strain WH7803)).